A 159-amino-acid polypeptide reads, in one-letter code: Histone H1 (159 aa).

3 disordered regions span residues 1–31 (MAEKESSKKVTTKKPAATHRRRDGCNSITEL), 80–99 (KGAECAGGQGTGVGEGKKEK), and 132–159 (AAKKVKAAPKKAKKPVKKTTEKKEKKKS). Positions 10-22 (VTTKKPAATHRRR) are enriched in basic residues. In terms of domain architecture, H15 spans 12–102 (TKKPAATHRR…GEGKKEKEKA (91 aa)). Gly residues predominate over residues 84 to 93 (CAGGQGTGVG). Positions 134 to 148 (KKVKAAPKKAKKPVK) are enriched in basic residues. Over residues 149–159 (KTTEKKEKKKS) the composition is skewed to basic and acidic residues.

Belongs to the histone H1/H5 family.

The protein localises to the nucleus. The protein resides in the chromosome. Its function is as follows. Histones H1 are necessary for the condensation of nucleosome chains into higher-order structures. The sequence is that of Histone H1 from Psammechinus miliaris (Green sea urchin).